The primary structure comprises 76 residues: Putative small nuclear ribonucleoprotein G-like protein 15 (76 aa).

A Sm domain is found at 4-76 (AHPPELKKFT…IIMLEALERV (73 aa)).

It belongs to the snRNP Sm proteins family.

Its subcellular location is the nucleus. Its function is as follows. Associated with snRNP U1, U2, U4/U6 and U5. The sequence is that of Putative small nuclear ribonucleoprotein G-like protein 15 (SNRPGP15) from Homo sapiens (Human).